The primary structure comprises 235 residues: Histidine/lysine/arginine/ornithine transport system permease protein HisM (235 aa).

The Periplasmic segment spans residues 1 to 26 (MIEIIQEYWKSLLWTDGYRFTGVAIT). The ABC transmembrane type-1 domain maps to 23 to 221 (VAITLWLLIS…LISYVLISLF (199 aa)). Residues 27-47 (LWLLISSVVMGGLLAVILAVG) form a helical membrane-spanning segment. The Cytoplasmic segment spans residues 48-58 (RVSSNKFIRFP). A helical membrane pass occupies residues 59-79 (IWLFTYIFRGTPLYVQLLVFY). Residues 80–104 (SGMYTLEIVKGTDLLNAFFRSGLNC) are Periplasmic-facing. A helical membrane pass occupies residues 105–125 (TVLALTLNTCAYTTEIFAGAI). The Cytoplasmic portion of the chain corresponds to 126–157 (RSVPHGEIEAARAYGFSSFKMYRCIILPSALR). Residues 158–178 (IALPAYSNEVILMLHSTALAF) traverse the membrane as a helical segment. At 179–199 (TATVPDLLKIARDINSATYQP) the chain is on the periplasmic side. A helical transmembrane segment spans residues 200–220 (FTAFGIAAVLYLLISYVLISL). Over 221–235 (FRRAERRWLQHVSSK) the chain is Cytoplasmic.

This sequence belongs to the binding-protein-dependent transport system permease family. HisMQ subfamily. As to quaternary structure, the HisPMQJ complex is composed of two ATP-binding proteins (HisP), two transmembrane proteins (HisM and HisQ) and a solute-binding protein (HisJ). The HisPMQ-ArgT complex is composed of two ATP-binding proteins (HisP), two transmembrane proteins (HisM and HisQ) and a solute-binding protein (ArgT).

The protein localises to the cell inner membrane. Functionally, part of the ABC transporter complex HisPMQJ involved in histidine transport. Is also part of the ABC transporter complex HisPMQ-ArgT involved in lysine/arginine/ornithine transport. Probably responsible for the translocation of the substrate across the membrane. The polypeptide is Histidine/lysine/arginine/ornithine transport system permease protein HisM (hisM) (Salmonella typhi).